Reading from the N-terminus, the 495-residue chain is Internal alternative NAD(P)H-ubiquinone oxidoreductase A1, mitochondrial (495 aa).

The N-terminal 41 residues, 1–41, are a transit peptide targeting the mitochondrion; the sequence is MPWFKNLIKISKTITNQSSSYKSITPLASPLLTQFLQFTKQ. Residue 61-91 coordinates FAD; that stretch reads RIVVLGSGWAGCRLMKDIDTNIYDVVCVSPR. 228–264 contributes to the NAD(+) binding site; it reads LHCVVVGGGPTGVEFSGELSDFILKDVHQRYAHVKDY. The short motif at 486 to 495 is the Microbody targeting signal element; sequence LVFGRDISRI.

This sequence belongs to the NADH dehydrogenase family. FAD is required as a cofactor.

The protein localises to the mitochondrion inner membrane. Its subcellular location is the peroxisome. It carries out the reaction a quinone + NADH + H(+) = a quinol + NAD(+). It catalyses the reaction a ubiquinone + NADH + H(+) = a ubiquinol + NAD(+). Functionally, alternative NADH-ubiquinone oxidoreductase which catalyzes the oxidation of mitochondrial NADH does not translocate protons across the inner mitochondrial membrane. The polypeptide is Internal alternative NAD(P)H-ubiquinone oxidoreductase A1, mitochondrial (NDA1) (Solanum tuberosum (Potato)).